Reading from the N-terminus, the 145-residue chain is Cell wall teichoic acid glycosylation protein GtcA (145 aa).

A run of 4 helical transmembrane segments spans residues 21-41, 45-65, 91-111, and 122-142; these read IFMY…TFWL, ILNW…VLFA, FFGF…LLIS, and IWTN…IIFK.

Belongs to the GtrA family.

The protein localises to the cell membrane. Its function is as follows. Involved in the decoration of cell wall teichoic acid with galactose and glucose. The chain is Cell wall teichoic acid glycosylation protein GtcA (gtcA) from Listeria monocytogenes.